The following is a 187-amino-acid chain: Elongation factor P (187 aa).

This sequence belongs to the elongation factor P family.

The protein resides in the cytoplasm. Its pathway is protein biosynthesis; polypeptide chain elongation. In terms of biological role, involved in peptide bond synthesis. Stimulates efficient translation and peptide-bond synthesis on native or reconstituted 70S ribosomes in vitro. Probably functions indirectly by altering the affinity of the ribosome for aminoacyl-tRNA, thus increasing their reactivity as acceptors for peptidyl transferase. This is Elongation factor P from Granulibacter bethesdensis (strain ATCC BAA-1260 / CGDNIH1).